Reading from the N-terminus, the 552-residue chain is Glutamine--tRNA ligase (552 aa).

Residues 34–44 (PEPNGYLHIGH) carry the 'HIGH' region motif. Residues 35-37 (EPN) and 41-47 (HIGHAKS) each bind ATP. The L-glutamine site is built by D67 and Y212. Residues T231, 261–262 (RL), and 269–271 (MSK) each bind ATP. Residues 268–272 (VMSKR) carry the 'KMSKS' region motif.

This sequence belongs to the class-I aminoacyl-tRNA synthetase family. In terms of assembly, monomer.

It is found in the cytoplasm. The enzyme catalyses tRNA(Gln) + L-glutamine + ATP = L-glutaminyl-tRNA(Gln) + AMP + diphosphate. The sequence is that of Glutamine--tRNA ligase from Aliivibrio fischeri (strain MJ11) (Vibrio fischeri).